Reading from the N-terminus, the 210-residue chain is Prolactin (210 aa).

Residues 1–23 (MTQGSRLYFAVAVLMCGFVSING) form the signal peptide. 2 cysteine pairs are disulfide-bonded: C69/C183 and C200/C210.

Belongs to the somatotropin/prolactin family. In terms of tissue distribution, pituitary gland.

It localises to the secreted. This is Prolactin (prl1) from Carassius auratus (Goldfish).